A 195-amino-acid polypeptide reads, in one-letter code: Imidazoleglycerol-phosphate dehydratase (195 aa).

It belongs to the imidazoleglycerol-phosphate dehydratase family.

The protein resides in the cytoplasm. The catalysed reaction is D-erythro-1-(imidazol-4-yl)glycerol 3-phosphate = 3-(imidazol-4-yl)-2-oxopropyl phosphate + H2O. Its pathway is amino-acid biosynthesis; L-histidine biosynthesis; L-histidine from 5-phospho-alpha-D-ribose 1-diphosphate: step 6/9. In Burkholderia cenocepacia (strain ATCC BAA-245 / DSM 16553 / LMG 16656 / NCTC 13227 / J2315 / CF5610) (Burkholderia cepacia (strain J2315)), this protein is Imidazoleglycerol-phosphate dehydratase.